The chain runs to 272 residues: Potassium channel regulatory protein (272 aa).

Residues 5 to 106 (ELVTLNVGGK…LLNPYLLQPR (102 aa)) enclose the BTB domain.

In terms of assembly, can form homooligomers. Interacts with KCNA1 (via cytoplasmic N-terminal domain) and KCNA4. Ubiquitous in normal tissues and expressed in some tumor tissues.

It localises to the endoplasmic reticulum. In terms of biological role, inhibits potassium fluxes in cells. May regulate Kv1 family channel proteins by retaining a fraction of channels in endomembranes. This is Potassium channel regulatory protein (KCNRG) from Homo sapiens (Human).